The primary structure comprises 393 residues: Squamosa promoter-binding-like protein 11 (393 aa).

Residues 74 to 96 (QSTSINSSSPEAKRCKLASESSP) form a disordered region. The segment at 172 to 249 (VPRCQIDGCE…SHHNARRRKP (78 aa)) adopts an SBP-type zinc-finger fold. The Zn(2+) site is built by C175, C180, C197, H200, C216, C219, H223, and C235. A Bipartite nuclear localization signal motif is present at residues 232 to 248 (KRSCRKRLSHHNARRRK).

Zn(2+) serves as cofactor.

The protein resides in the nucleus. Trans-acting factor that binds specifically to the consensus nucleotide sequence 5'-TNCGTACAA-3'. This chain is Squamosa promoter-binding-like protein 11 (SPL11), found in Arabidopsis thaliana (Mouse-ear cress).